The primary structure comprises 888 residues: E3 ubiquitin-protein ligase SH3RF1 (888 aa).

The RING-type zinc finger occupies 12–53 (CPVCLERLDASAKVLPCQHTFCKRCLLGIVGSRNELRCPECR). 2 SH3 domains span residues 134-193 (PQLP…IIKP) and 196-259 (QPPP…FNSA). Residues 275 to 321 (DAGECSSAAAQSSTAPKHSDTKKNTKKRHSFTSLTMANKSSQASQNR) are disordered. The tract at residues 292-362 (HSDTKKNTKK…APSQVHISTT (71 aa)) is interaction with RAC1. Ser-304 is subject to Phosphoserine. Positions 305–321 (FTSLTMANKSSQASQNR) are enriched in polar residues. Residues 440 to 543 (HLRPQTRPSV…STAGGPAQKL (104 aa)) are interaction with AKT2. The 62-residue stretch at 445-506 (TRPSVYVAIY…PGNYVAPVTR (62 aa)) folds into the SH3 3 domain. Disordered regions lie at residues 516–549 (VPMS…NGVA), 617–637 (SPAS…APLM), and 693–741 (PDSA…ASPT). Over residues 520 to 535 (TAGQTSRGVTMVSPST) the composition is skewed to polar residues. The residue at position 532 (Ser-532) is a Phosphoserine. Over residues 693–704 (PDSASLACGNSS) the composition is skewed to polar residues. The span at 707–718 (KPDKDSKKEKKG) shows a compositional bias: basic and acidic residues. Ser-735 is modified (phosphoserine). The SH3 4 domain occupies 829 to 888 (VVCERHRVVVSYPPQSEAELELKEGDIVFVHKKREDGWFKGTLQRNGKTGLFPGSFVENI).

The protein belongs to the SH3RF family. As to quaternary structure, interacts with HERP1. Interacts with RAC1; in a GTP-dependent manner. Interacts with MAP3K10/MLK2 and MAP3K11/MLK3. Interacts with MAPK8IP; this interaction leads to the PJAC complex (POSH-JIP or SH3RF1/MAPK8IP apoptotic complex) with a 1:1 ratio. Interacts with SIAH1. Probably part of a signaling complex that may contain SH3RF1, MAPK8IP, DLK1, MAP2K4/MKK4, MAP2K7/MKK7, MAPK8/JNK1, MAPK9/JNK2, AKT1 and AKT2. Found in a complex with RAC2, MAP3K7/TAK1, MAP2K7/MKK7, MAPK8IP1/JIP1, MAPK8/JNK1 and MAPK9/JNK2. Found in a complex with RAC1, MAP3K11/MLK3, MAP2K7/MKK7, MAPK8IP1/JIP1 and MAPK8/JNK1. Interacts with SH3RF2. Post-translationally, phosphorylated at Ser-304 by AKT1 and AKT2. When phosphorylated, it has reduced ability to bind Rac. In terms of processing, autoubiquitinated. Ubiquitinated by SH3RF2, leading to proteasome-mediated degradation.

Its subcellular location is the cytoplasm. It is found in the perinuclear region. It localises to the cell projection. The protein localises to the lamellipodium. The protein resides in the golgi apparatus. Its subcellular location is the trans-Golgi network. It carries out the reaction S-ubiquitinyl-[E2 ubiquitin-conjugating enzyme]-L-cysteine + [acceptor protein]-L-lysine = [E2 ubiquitin-conjugating enzyme]-L-cysteine + N(6)-ubiquitinyl-[acceptor protein]-L-lysine.. It participates in protein modification; protein ubiquitination. Functionally, has E3 ubiquitin-protein ligase activity. In the absence of an external substrate, it can catalyze self-ubiquitination. Stimulates ubiquitination of potassium channel KCNJ1, enhancing it's dynamin-dependent and clathrin-independent endocytosis. Acts as a scaffold protein that coordinates with MAPK8IP1/JIP1 in organizing different components of the JNK pathway, including RAC1 or RAC2, MAP3K11/MLK3 or MAP3K7/TAK1, MAP2K7/MKK7, MAPK8/JNK1 and/or MAPK9/JNK2 into a functional multiprotein complex to ensure the effective activation of the JNK signaling pathway. Regulates the differentiation of CD4(+) and CD8(+) T-cells and promotes T-helper 1 (Th1) cell differentiation. Regulates the activation of MAPK8/JNK1 and MAPK9/JNK2 in CD4(+) T-cells and the activation of MAPK8/JNK1 in CD8(+) T-cells. Controls proper cortical neuronal migration and the formation of proximal cytoplasmic dilation in the leading process (PCDLP) in migratory neocortical neurons by regulating the proper localization of activated RAC1 and F-actin assembly. The polypeptide is E3 ubiquitin-protein ligase SH3RF1 (SH3RF1) (Pongo abelii (Sumatran orangutan)).